The primary structure comprises 259 residues: Ribosomal RNA small subunit methyltransferase A (259 aa).

S-adenosyl-L-methionine contacts are provided by asparagine 13, leucine 15, glycine 40, glutamate 61, aspartate 85, and asparagine 103.

Belongs to the class I-like SAM-binding methyltransferase superfamily. rRNA adenine N(6)-methyltransferase family. RsmA subfamily.

It is found in the cytoplasm. It carries out the reaction adenosine(1518)/adenosine(1519) in 16S rRNA + 4 S-adenosyl-L-methionine = N(6)-dimethyladenosine(1518)/N(6)-dimethyladenosine(1519) in 16S rRNA + 4 S-adenosyl-L-homocysteine + 4 H(+). Its function is as follows. Specifically dimethylates two adjacent adenosines (A1518 and A1519) in the loop of a conserved hairpin near the 3'-end of 16S rRNA in the 30S particle. May play a critical role in biogenesis of 30S subunits. The chain is Ribosomal RNA small subunit methyltransferase A from Neisseria meningitidis serogroup B (strain ATCC BAA-335 / MC58).